The following is a 334-amino-acid chain: Holliday junction branch migration complex subunit RuvB (334 aa).

Positions 4–184 are large ATPase domain (RuvB-L); that stretch reads ADRLIQPQLQ…FGIPLRLEFY (181 aa). ATP contacts are provided by residues R24, G65, K68, T69, T70, 131-133, R174, Y184, and R221; that span reads EDY. T69 is a binding site for Mg(2+). Residues 185–255 form a small ATPAse domain (RuvB-S) region; the sequence is NIKDLSTIVT…VADHALDLLD (71 aa). Residues 258-334 form a head domain (RuvB-H) region; the sequence is NEGFDYMDRK…YQHFQLIKPE (77 aa). DNA-binding residues include R294, R313, and R318.

The protein belongs to the RuvB family. In terms of assembly, homohexamer. Forms an RuvA(8)-RuvB(12)-Holliday junction (HJ) complex. HJ DNA is sandwiched between 2 RuvA tetramers; dsDNA enters through RuvA and exits via RuvB. An RuvB hexamer assembles on each DNA strand where it exits the tetramer. Each RuvB hexamer is contacted by two RuvA subunits (via domain III) on 2 adjacent RuvB subunits; this complex drives branch migration. In the full resolvosome a probable DNA-RuvA(4)-RuvB(12)-RuvC(2) complex forms which resolves the HJ.

The protein resides in the cytoplasm. It catalyses the reaction ATP + H2O = ADP + phosphate + H(+). In terms of biological role, the RuvA-RuvB-RuvC complex processes Holliday junction (HJ) DNA during genetic recombination and DNA repair, while the RuvA-RuvB complex plays an important role in the rescue of blocked DNA replication forks via replication fork reversal (RFR). RuvA specifically binds to HJ cruciform DNA, conferring on it an open structure. The RuvB hexamer acts as an ATP-dependent pump, pulling dsDNA into and through the RuvAB complex. RuvB forms 2 homohexamers on either side of HJ DNA bound by 1 or 2 RuvA tetramers; 4 subunits per hexamer contact DNA at a time. Coordinated motions by a converter formed by DNA-disengaged RuvB subunits stimulates ATP hydrolysis and nucleotide exchange. Immobilization of the converter enables RuvB to convert the ATP-contained energy into a lever motion, pulling 2 nucleotides of DNA out of the RuvA tetramer per ATP hydrolyzed, thus driving DNA branch migration. The RuvB motors rotate together with the DNA substrate, which together with the progressing nucleotide cycle form the mechanistic basis for DNA recombination by continuous HJ branch migration. Branch migration allows RuvC to scan DNA until it finds its consensus sequence, where it cleaves and resolves cruciform DNA. This Shewanella sp. (strain W3-18-1) protein is Holliday junction branch migration complex subunit RuvB.